A 264-amino-acid polypeptide reads, in one-letter code: MMESIKKLRELTGAGMMDVKKALSDAGNDEDKAVALLRERGIVKAAKKADREAKEGIVRFVVEGNRAAIVEVNSETDFVARNSDFQALVEKLAQTALSAKTNDVEEFRNFSMDGETVGTVVAAAAGKIGENLVLNRVAYIEGDKVAGYVHSNGKIGVLVDVAGGDETKAKDVALHVAAERPQYLSRDEVNQDDIEKEREILTNKALNEGKPQQIVEKIVSGQIGKFYEEKVLPEQRYVKDNSMTVGQYLGDASVKRFVRFEIGA.

The tract at residues 76–79 (TDFV) is involved in Mg(2+) ion dislocation from EF-Tu.

The protein belongs to the EF-Ts family.

The protein resides in the cytoplasm. Its function is as follows. Associates with the EF-Tu.GDP complex and induces the exchange of GDP to GTP. It remains bound to the aminoacyl-tRNA.EF-Tu.GTP complex up to the GTP hydrolysis stage on the ribosome. This is Elongation factor Ts from Deinococcus deserti (strain DSM 17065 / CIP 109153 / LMG 22923 / VCD115).